Reading from the N-terminus, the 569-residue chain is Mitochondrial import receptor subunit tomm-70 (569 aa).

Residues 1 to 12 (MVETTGISDQTK) lie on the Mitochondrial intermembrane side of the membrane. A helical membrane pass occupies residues 13–32 (KVLIGVAAAATVAGVGYLVY). Residues 33–569 (KSFGGSDLER…KRAAEMLDMY (537 aa)) are Cytoplasmic-facing. 4 TPR repeats span residues 44–77 (LEEIKALGNLKFKEKQYDSALEAFTKGVEKAGPN), 119–152 (TKAYLRAAKALNDVGKKQDALAYLLAAFTLDSSL), 221–254 (DQKQYQLALEKFKKGKYEELIDLLTEENSYPPAM), and 510–544 (LHLLGTNGPEPMIKKENYERAMESIRNAALFAPPR).

The protein belongs to the Tom70 family. Forms part of the preprotein translocase complex of the outer mitochondrial membrane (TOM complex). Expressed in body wall muscle cells, the pharynx and structures in the tail.

The protein resides in the mitochondrion outer membrane. Its function is as follows. Receptor that accelerates the import of all mitochondrial precursor proteins. The chain is Mitochondrial import receptor subunit tomm-70 from Caenorhabditis elegans.